We begin with the raw amino-acid sequence, 540 residues long: Hexose transporter HXT14 (540 aa).

At 1–56 (MTAQIPYQHSSGYISHFHNNELDAGRGRDYNVTIKYLDDKEENIEGQAAKISHNAS) the chain is on the cytoplasmic side. The helical transmembrane segment at 57–76 (LHIPVLLCLVISLGGFIFGW) threads the bilayer. Residues 77 to 119 (DIGTIGGMTNMVSFQEKFGTTNIIHDDETIFVSTKKLTDLQIG) are Extracellular-facing. The helical transmembrane segment at 120-140 (LIISIFNISCGVGALTLSKIG) threads the bilayer. The Cytoplasmic segment spans residues 141 to 146 (DWIGRK). Residues 147-167 (GGIWFALVVYCIGITIQILSY) traverse the membrane as a helical segment. At 168-177 (GRWYFLTLGR) the chain is on the extracellular side. Residues 178-198 (AVTGIGVGVTTVLVPMFLSEN) form a helical membrane-spanning segment. The Cytoplasmic segment spans residues 199–204 (SPLKIR). The helical transmembrane segment at 205-225 (GSMVSTYQLIVTFGILMGNIL) threads the bilayer. The Extracellular portion of the chain corresponds to 226–243 (NFICERCYKDPTQNIAWQ). The helical transmembrane segment at 244–264 (LPLFLGYIWAIIIGMSLVYVP) threads the bilayer. Topologically, residues 265–357 (ESPQYLAKIK…IMAFQQLSGI (93 aa)) are cytoplasmic. The chain crosses the membrane as a helical span at residues 358 to 374 (NYFFYYGTSVFKGVGIK). The Extracellular segment spans residues 375–380 (DPYITS). A helical membrane pass occupies residues 381–398 (IILSSVNFLSTILGIYYV). Over 399 to 405 (EKWGHKT) the chain is Cytoplasmic. A helical membrane pass occupies residues 406-426 (CLLYGSTNLLFYMMTYATVGT). Topologically, residues 427-440 (FGRETDFSNIVLII) are extracellular. Residues 441–461 (VTCCFIFWFAITLGPVTFVLV) traverse the membrane as a helical segment. At 462 to 478 (SELFPLRTRAISMAICT) the chain is on the cytoplasmic side. The chain crosses the membrane as a helical span at residues 479 to 499 (FINWMFNFLISLLTPMIVSKI). A topological domain (extracellular) is located at residue Asp-500. A helical transmembrane segment spans residues 501-521 (FKLGYIFAACLLALIIFSWIL). Topologically, residues 522-540 (VPETRKKNEQEINKIFEPE) are cytoplasmic.

This sequence belongs to the major facilitator superfamily. Sugar transporter (TC 2.A.1.1) family.

The protein resides in the membrane. Functionally, probable glucose transporter. This is Hexose transporter HXT14 (HXT14) from Saccharomyces cerevisiae (strain ATCC 204508 / S288c) (Baker's yeast).